The primary structure comprises 493 residues: Hexokinase-like 1 protein (493 aa).

A Hexokinase domain is found at Ala-38–Ala-488. Residues Ser-93–Val-232 form a hexokinase small subdomain region. ADP-binding residues include Gly-107, Thr-108, and Asn-109. Residues Thr-198, Lys-199, Asn-233, and Asp-234 each contribute to the D-glucose site. Residues Asn-233–Asp-477 form a hexokinase large subdomain region. Thr-257 serves as a coordination point for ADP. Positions 260, 287, and 317 each coordinate D-glucose. Residue Ala-442 participates in ADP binding.

This sequence belongs to the hexokinase family.

It catalyses the reaction a D-hexose + ATP = a D-hexose 6-phosphate + ADP + H(+). It carries out the reaction D-fructose + ATP = D-fructose 6-phosphate + ADP + H(+). The catalysed reaction is D-glucose + ATP = D-glucose 6-phosphate + ADP + H(+). It participates in carbohydrate metabolism; hexose metabolism. Its pathway is carbohydrate degradation; glycolysis; D-glyceraldehyde 3-phosphate and glycerone phosphate from D-glucose: step 1/4. Its function is as follows. Fructose and glucose phosphorylating enzyme. The protein is Hexokinase-like 1 protein of Arabidopsis thaliana (Mouse-ear cress).